Consider the following 302-residue polypeptide: Heme A synthase (302 aa).

Topologically, residues 1–8 are cytoplasmic; sequence MFSKKNLK. A helical transmembrane segment spans residues 9–29; it reads WLSVLATVIMAFVQLGGALVT. The Extracellular segment spans residues 30–67; that stretch reads KTGSADGCGSDWPLCHGAFLPQNLPIQTLIELSHRAVS. C37 and C44 are disulfide-bonded. Residue E60 is part of the active site. A heme o-binding site is contributed by H63. Residues 68-88 traverse the membrane as a helical segment; that stretch reads GLSLIVVLWLVIVAWKHIGYI. At 89-93 the chain is on the cytoplasmic side; the sequence is KEVKP. The chain crosses the membrane as a helical span at residues 94–114; it reads LSCISVGFLLIQALVGAAAVM. Residues 115–122 are Extracellular-facing; the sequence is WQQNAYVL. The helical transmembrane segment at 123–143 threads the bilayer; sequence ALHFGISLISFSSVFVLTLII. H125 provides a ligand contact to heme o. Residues 144–161 lie on the Cytoplasmic side of the membrane; sequence YEVDRKYEADELFIRKPL. The chain crosses the membrane as a helical span at residues 162-182; the sequence is RIYTWIMALIVYMTIYTGALV. Over 183–215 the chain is Extracellular; it reads RHKEASLAYGQWPLPFNDLMPHNVQDWVNLTHR. A heme b-binding site is contributed by H214. Residues 216–236 traverse the membrane as a helical segment; the sequence is GMALIAFIWILITFIHAVNNY. Over 237 to 244 the chain is Cytoplasmic; sequence RENRTIRY. A helical transmembrane segment spans residues 245-265; it reads GYTAAFILVILQVTTGALSII. Residues 266–271 are Extracellular-facing; it reads TEVNLF. The chain crosses the membrane as a helical span at residues 272 to 292; it reads IALLHALFITLLFGLIAYFII. H276 is a binding site for heme b. Over 293–302 the chain is Cytoplasmic; it reads LMLRTIRSGG.

It belongs to the COX15/CtaA family. Type 1 subfamily. As to quaternary structure, interacts with CtaB. Requires heme b as cofactor.

The protein localises to the cell membrane. It carries out the reaction Fe(II)-heme o + 2 A + H2O = Fe(II)-heme a + 2 AH2. Its pathway is porphyrin-containing compound metabolism; heme A biosynthesis; heme A from heme O: step 1/1. Its function is as follows. Catalyzes the conversion of heme O to heme A by two successive hydroxylations of the methyl group at C8. The first hydroxylation forms heme I, the second hydroxylation results in an unstable dihydroxymethyl group, which spontaneously dehydrates, resulting in the formyl group of heme A. The protein is Heme A synthase of Staphylococcus saprophyticus subsp. saprophyticus (strain ATCC 15305 / DSM 20229 / NCIMB 8711 / NCTC 7292 / S-41).